A 358-amino-acid chain; its full sequence is Phosphoserine aminotransferase (358 aa).

Residue R41 coordinates L-glutamate. Residues A75–S76, W100, T148, D167, and Q190 each bind pyridoxal 5'-phosphate. K191 bears the N6-(pyridoxal phosphate)lysine mark. Residue N233–T234 participates in pyridoxal 5'-phosphate binding.

The protein belongs to the class-V pyridoxal-phosphate-dependent aminotransferase family. SerC subfamily. In terms of assembly, homodimer. It depends on pyridoxal 5'-phosphate as a cofactor.

It localises to the cytoplasm. The catalysed reaction is O-phospho-L-serine + 2-oxoglutarate = 3-phosphooxypyruvate + L-glutamate. It carries out the reaction 4-(phosphooxy)-L-threonine + 2-oxoglutarate = (R)-3-hydroxy-2-oxo-4-phosphooxybutanoate + L-glutamate. It functions in the pathway amino-acid biosynthesis; L-serine biosynthesis; L-serine from 3-phospho-D-glycerate: step 2/3. Its pathway is cofactor biosynthesis; pyridoxine 5'-phosphate biosynthesis; pyridoxine 5'-phosphate from D-erythrose 4-phosphate: step 3/5. Catalyzes the reversible conversion of 3-phosphohydroxypyruvate to phosphoserine and of 3-hydroxy-2-oxo-4-phosphonooxybutanoate to phosphohydroxythreonine. This is Phosphoserine aminotransferase from Campylobacter jejuni subsp. doylei (strain ATCC BAA-1458 / RM4099 / 269.97).